Consider the following 295-residue polypeptide: Ribosome production factor 1 (295 aa).

The interval 24 to 47 (HEKNKERHTMRRKRAKEERENPEL) is disordered. Basic and acidic residues predominate over residues 38–47 (AKEERENPEL). Residues 93–276 (PKIFLTTNVN…LKRLQRGIKE (184 aa)) enclose the Brix domain. The interval 254–271 (VGLQELGPQFTLKLKRLQ) is RNA-binding.

As to quaternary structure, part of a complex that includes BRX1, RPF1, RPF2 and SSF1 or SSF2.

The protein localises to the nucleus. Its subcellular location is the nucleolus. Essential protein. Required for biogenesis of the 60S ribosomal subunit. The polypeptide is Ribosome production factor 1 (RPF1) (Saccharomyces cerevisiae (strain ATCC 204508 / S288c) (Baker's yeast)).